A 676-amino-acid chain; its full sequence is UvrABC system protein B (676 aa).

The Helicase ATP-binding domain maps to 26-414 (EGLDAGLAHQ…SAGEIADQVV (389 aa)). 39 to 46 (GVTGSGKT) is an ATP binding site. The Beta-hairpin signature appears at 92–115 (YYDYYQPEAYVPTTDTFIEKDASV). The Helicase C-terminal domain occupies 432–598 (QVDDLLSEIR…ALKRNIKDIM (167 aa)). Positions 636–671 (EKEISRLEAAMYQHAQDLEFELAAEKRDEIEKLRAQ) constitute a UVR domain.

It belongs to the UvrB family. As to quaternary structure, forms a heterotetramer with UvrA during the search for lesions. Interacts with UvrC in an incision complex.

Its subcellular location is the cytoplasm. Functionally, the UvrABC repair system catalyzes the recognition and processing of DNA lesions. A damage recognition complex composed of 2 UvrA and 2 UvrB subunits scans DNA for abnormalities. Upon binding of the UvrA(2)B(2) complex to a putative damaged site, the DNA wraps around one UvrB monomer. DNA wrap is dependent on ATP binding by UvrB and probably causes local melting of the DNA helix, facilitating insertion of UvrB beta-hairpin between the DNA strands. Then UvrB probes one DNA strand for the presence of a lesion. If a lesion is found the UvrA subunits dissociate and the UvrB-DNA preincision complex is formed. This complex is subsequently bound by UvrC and the second UvrB is released. If no lesion is found, the DNA wraps around the other UvrB subunit that will check the other stand for damage. The sequence is that of UvrABC system protein B from Vibrio parahaemolyticus serotype O3:K6 (strain RIMD 2210633).